Here is a 210-residue protein sequence, read N- to C-terminus: Large ribosomal subunit protein uL3 (210 aa).

The segment at 119–143 (GYQGNIKKDGQSRGPMAHGSRYHRR) is disordered.

It belongs to the universal ribosomal protein uL3 family. As to quaternary structure, part of the 50S ribosomal subunit. Forms a cluster with proteins L14 and L19.

Its function is as follows. One of the primary rRNA binding proteins, it binds directly near the 3'-end of the 23S rRNA, where it nucleates assembly of the 50S subunit. In Lacticaseibacillus casei (strain BL23) (Lactobacillus casei), this protein is Large ribosomal subunit protein uL3.